We begin with the raw amino-acid sequence, 305 residues long: MLDTSIQELIDKWQKYLDLQRNYSNHTVISYNNDLKHFLEFMNYYNSELVTINHIKTADIRLIRSWLAKRNCDNFTTSSISRGLSAVKNFYRFLEKTTQLNSHIIFSIKSPKKTKLLPKALSEDDVVISLEHIEEYGNVKWVELRNKALLVLIYASGLRISEALSITKLHLQNLEFIRIIGKGSKERIIPWLPIAKNLITQYLEILPYKLGDNEPIFRGKQGKKLQPPVFNRELIKLKHFYGLPQHLTAHSFRHSFASHLLEHGADLRSIQELLGHKSLSTTQNYTKTSIKHLEAVYTTAYPIKK.

The region spanning 4 to 95 is the Core-binding (CB) domain; sequence TSIQELIDKW…AVKNFYRFLE (92 aa). A Tyr recombinase domain is found at 116–298; that stretch reads LLPKALSEDD…SIKHLEAVYT (183 aa). Active-site residues include R159, K182, H250, R253, and H276. The O-(3'-phospho-DNA)-tyrosine intermediate role is filled by Y285.

It belongs to the 'phage' integrase family. XerC subfamily. As to quaternary structure, forms a cyclic heterotetrameric complex composed of two molecules of XerC and two molecules of XerD.

It localises to the cytoplasm. In terms of biological role, site-specific tyrosine recombinase, which acts by catalyzing the cutting and rejoining of the recombining DNA molecules. The XerC-XerD complex is essential to convert dimers of the bacterial chromosome into monomers to permit their segregation at cell division. It also contributes to the segregational stability of plasmids. The protein is Tyrosine recombinase XerC of Rickettsia felis (strain ATCC VR-1525 / URRWXCal2) (Rickettsia azadi).